We begin with the raw amino-acid sequence, 462 residues long: Syringate O-demethylase (462 aa).

Belongs to the GcvT family.

The catalysed reaction is syringate + (6S)-5,6,7,8-tetrahydrofolate = 3-O-methylgallate + (6S)-5-methyl-5,6,7,8-tetrahydrofolate. It participates in secondary metabolite metabolism; lignin degradation. In terms of biological role, involved in the catabolism of syringate. Catalyzes the conversion of syringate to 3-O-methylgallate (3MGA) in the presence of tetrahydrofolate. Has weak activity with vanillate and 3-O-methylgallate. The protein is Syringate O-demethylase of Sphingobium sp. (strain NBRC 103272 / SYK-6).